We begin with the raw amino-acid sequence, 403 residues long: S-adenosylmethionine synthase (403 aa).

His-17 provides a ligand contact to ATP. Asp-19 serves as a coordination point for Mg(2+). Position 45 (Glu-45) interacts with K(+). Positions 58 and 104 each coordinate L-methionine. Residues 104–114 (QSSDIAQGVNT) are flexible loop. ATP-binding positions include 179 to 181 (DGK), 250 to 251 (KF), Asp-259, 265 to 266 (RK), Ala-282, and Lys-286. An L-methionine-binding site is contributed by Asp-259. Lys-290 contacts L-methionine.

It belongs to the AdoMet synthase family. Homotetramer; dimer of dimers. Requires Mg(2+) as cofactor. The cofactor is K(+).

The protein localises to the cytoplasm. It carries out the reaction L-methionine + ATP + H2O = S-adenosyl-L-methionine + phosphate + diphosphate. The protein operates within amino-acid biosynthesis; S-adenosyl-L-methionine biosynthesis; S-adenosyl-L-methionine from L-methionine: step 1/1. In terms of biological role, catalyzes the formation of S-adenosylmethionine (AdoMet) from methionine and ATP. The overall synthetic reaction is composed of two sequential steps, AdoMet formation and the subsequent tripolyphosphate hydrolysis which occurs prior to release of AdoMet from the enzyme. The protein is S-adenosylmethionine synthase of Mycobacterium leprae (strain Br4923).